A 216-amino-acid chain; its full sequence is Octanoyltransferase (216 aa).

In terms of domain architecture, BPL/LPL catalytic spans 32 to 207; sequence ENSPDELWLV…TFSQLLGYEH (176 aa). Substrate-binding positions include 71–78, 138–140, and 151–153; these read RGGQVTYH, SLG, and GLA. Residue cysteine 169 is the Acyl-thioester intermediate of the active site.

It belongs to the LipB family.

It is found in the cytoplasm. The enzyme catalyses octanoyl-[ACP] + L-lysyl-[protein] = N(6)-octanoyl-L-lysyl-[protein] + holo-[ACP] + H(+). It functions in the pathway protein modification; protein lipoylation via endogenous pathway; protein N(6)-(lipoyl)lysine from octanoyl-[acyl-carrier-protein]: step 1/2. In terms of biological role, catalyzes the transfer of endogenously produced octanoic acid from octanoyl-acyl-carrier-protein onto the lipoyl domains of lipoate-dependent enzymes. Lipoyl-ACP can also act as a substrate although octanoyl-ACP is likely to be the physiological substrate. This is Octanoyltransferase from Shewanella amazonensis (strain ATCC BAA-1098 / SB2B).